Reading from the N-terminus, the 478-residue chain is Monocarboxylate transporter 2 (478 aa).

The Cytoplasmic segment spans residues 1–15; the sequence is MPPMPSAPPVHPPPD. A helical membrane pass occupies residues 16–36; sequence GGWGWIVVGAAFISIGFSYAF. At 37 to 59 the chain is on the extracellular side; the sequence is PKAVTVFFKEIQQIFHTTYSEIA. The helical transmembrane segment at 60-80 threads the bilayer; sequence WISSIMLAVMYAGGPVSSVLV. Residues 81–89 lie on the Cytoplasmic side of the membrane; that stretch reads NKYGSRPVV. Residues 90–110 traverse the membrane as a helical segment; that stretch reads IAGGLLCCLGMVLASFSSSVV. Over 111–115 the chain is Extracellular; it reads QLYLT. Residues 116–136 traverse the membrane as a helical segment; the sequence is MGFITGLGLAFNLQPALTIIG. The Cytoplasmic portion of the chain corresponds to 137-148; sequence KYFYRKRPMANG. A helical membrane pass occupies residues 149–169; the sequence is LAMAGSPVFLSSLAPFNQYLF. The Extracellular portion of the chain corresponds to 170-173; it reads NTFG. The helical transmembrane segment at 174 to 194 threads the bilayer; it reads WKGSFLILGSLLLNACVAGSL. Topologically, residues 195 to 246 are cytoplasmic; it reads MRPLGPNQTTSKSKNKTGKTEDDSSPKKIKTKKSTWEKVNKYLDFSLFKHRG. Positions 200-224 are disordered; sequence PNQTTSKSKNKTGKTEDDSSPKKIK. The helical transmembrane segment at 247–267 threads the bilayer; the sequence is FLIYLSGNVIMFLGFFAPIIF. Topologically, residues 268–282 are extracellular; that stretch reads LAPYAKDQGIDEYSA. A helical membrane pass occupies residues 283–303; it reads AFLLSVMAFVDMFARPSVGLI. Residues 304–312 lie on the Cytoplasmic side of the membrane; the sequence is ANSKYIRPR. A helical transmembrane segment spans residues 313–333; the sequence is IQYFFSFAIMFNGVCHLLCPL. Topologically, residues 334–338 are extracellular; the sequence is AQDYT. A helical membrane pass occupies residues 339–359; it reads SLVLYAVFFGLGFGSVSSVLF. At 360-373 the chain is on the cytoplasmic side; it reads ETLMDLVGAPRFSS. The helical transmembrane segment at 374-394 threads the bilayer; the sequence is AVGLVTIVECGPVLLGPPLAG. Topologically, residues 395 to 406 are extracellular; sequence KLVDLTGEYKYM. Residues 407 to 427 traverse the membrane as a helical segment; it reads YMSCGAIVVAASVWLLIGNAI. Over 428–478 the chain is Cytoplasmic; sequence NYRLLAKERKEENARQKTRESEPLSKSKHSEDVNVKVSNAQSVTSERETNI. Residues 437 to 461 show a composition bias toward basic and acidic residues; sequence KEENARQKTRESEPLSKSKHSEDVN. Positions 437–478 are disordered; the sequence is KEENARQKTRESEPLSKSKHSEDVNVKVSNAQSVTSERETNI.

Belongs to the major facilitator superfamily. Monocarboxylate porter (TC 2.A.1.13) family. Homodimer. Interacts with GRID2IP. Interacts with EMB; interaction mediates SLC16A7 targeting to the plasma membrane. Interacts with isoform 2 of BSG. As to expression, detected in heart and in blood lymphocytes and monocytes (at protein level). High expression in testis, moderate to low in spleen, heart, kidney, pancreas, skeletal muscle, brain and leukocyte. Restricted expression in normal tissues, but widely expressed in cancer cells.

The protein resides in the cell membrane. Its subcellular location is the basolateral cell membrane. It is found in the cytoplasm. It catalyses the reaction pyruvate(out) + H(+)(out) = pyruvate(in) + H(+)(in). It carries out the reaction 3-methyl-2-oxobutanoate(out) + H(+)(out) = 3-methyl-2-oxobutanoate(in) + H(+)(in). The enzyme catalyses (S)-lactate(in) + H(+)(in) = (S)-lactate(out) + H(+)(out). The catalysed reaction is acetoacetate(out) + H(+)(out) = acetoacetate(in) + H(+)(in). It catalyses the reaction (R)-3-hydroxybutanoate(out) + H(+)(out) = (R)-3-hydroxybutanoate(in) + H(+)(in). It carries out the reaction 4-methyl-2-oxopentanoate(out) + H(+)(out) = 4-methyl-2-oxopentanoate(in) + H(+)(in). The enzyme catalyses (S)-3-hydroxybutanoate(out) + H(+)(out) = (S)-3-hydroxybutanoate(in) + H(+)(in). With respect to regulation, transport activity exhibits steep dependence on substrate concentration. Substrate concentration sensitivity of SLC16A7 arises from the strong inter-subunit cooperativity of the SLC16A7 dimer during transport. Inhibited by AR-C155858. In terms of biological role, proton-coupled monocarboxylate symporter. Catalyzes the rapid transport across the plasma membrane of monocarboxylates such as L-lactate, pyruvate and ketone bodies, acetoacetate, beta-hydroxybutyrate and acetate. Dimerization is functionally required and both subunits work cooperatively in transporting substrate. This Homo sapiens (Human) protein is Monocarboxylate transporter 2.